The following is a 497-amino-acid chain: Probable pyruvate kinase, cytosolic isozyme (497 aa).

Position 37 (arginine 37) interacts with substrate. Asparagine 39, serine 41, aspartate 71, and threonine 72 together coordinate K(+). 39–42 lines the ATP pocket; it reads NFSH. ATP-binding residues include arginine 78 and lysine 163. Lysine 227 provides a ligand contact to substrate. Glutamate 229 contacts Mg(2+). Substrate is bound by residues glycine 252, aspartate 253, and threonine 285. Mg(2+) is bound at residue aspartate 253.

The protein belongs to the pyruvate kinase family. In terms of assembly, homotetramer. The cofactor is Mg(2+). K(+) serves as cofactor.

It is found in the cytoplasm. The protein resides in the cytosol. It catalyses the reaction pyruvate + ATP = phosphoenolpyruvate + ADP + H(+). It functions in the pathway carbohydrate degradation; glycolysis; pyruvate from D-glyceraldehyde 3-phosphate: step 5/5. Its function is as follows. Key regulatory enzyme of the glycolytic pathway that catalyzes the final step of glycolysis, converting ADP and phosphoenolpyruvate (PEP) to ATP and pyruvate by essentially irreversible transphosphorylation. The protein is Probable pyruvate kinase, cytosolic isozyme of Arabidopsis thaliana (Mouse-ear cress).